The following is a 739-amino-acid chain: NAD(P)H-quinone oxidoreductase subunit 5, chloroplastic (739 aa).

The next 16 helical transmembrane spans lie at 9-29 (WIIP…LLLF), 40-60 (WSFQ…NLSI), 89-109 (IDPL…MVLI), 125-145 (FAYM…SNLI), 147-167 (IYIF…FWFT), 184-204 (IGDF…GSFE), 224-244 (LFVT…SAQF), 258-278 (TPIS…FLVA), 289-311 (YIMN…LALA), 318-338 (GLAF…GMGS), 354-374 (ALLF…VGYS), 396-416 (NTFL…CFWS), 427-447 (YSTI…FYIF), 546-566 (LFPL…GIPF), 605-625 (VSSV…YKPP), and 718-738 (ISSY…VFFI).

This sequence belongs to the complex I subunit 5 family. As to quaternary structure, NDH is composed of at least 16 different subunits, 5 of which are encoded in the nucleus.

The protein resides in the plastid. The protein localises to the chloroplast thylakoid membrane. The enzyme catalyses a plastoquinone + NADH + (n+1) H(+)(in) = a plastoquinol + NAD(+) + n H(+)(out). It catalyses the reaction a plastoquinone + NADPH + (n+1) H(+)(in) = a plastoquinol + NADP(+) + n H(+)(out). In terms of biological role, NDH shuttles electrons from NAD(P)H:plastoquinone, via FMN and iron-sulfur (Fe-S) centers, to quinones in the photosynthetic chain and possibly in a chloroplast respiratory chain. The immediate electron acceptor for the enzyme in this species is believed to be plastoquinone. Couples the redox reaction to proton translocation, and thus conserves the redox energy in a proton gradient. In Coffea arabica (Arabian coffee), this protein is NAD(P)H-quinone oxidoreductase subunit 5, chloroplastic (ndhF).